We begin with the raw amino-acid sequence, 92 residues long: DNA-binding protein HU (92 aa).

The interval 58-92 (AGTARNPRTGETVNRPASKTARFQVGEGLKSSLNS) is disordered.

Belongs to the bacterial histone-like protein family. Homodimer.

Histone-like DNA-binding protein which is capable of wrapping DNA to stabilize it, and thus to prevent its denaturation under extreme environmental conditions. The polypeptide is DNA-binding protein HU (hup) (Caulobacter vibrioides (strain ATCC 19089 / CIP 103742 / CB 15) (Caulobacter crescentus)).